Reading from the N-terminus, the 270-residue chain is Putative pyruvate, phosphate dikinase regulatory protein (270 aa).

148 to 155 (GISRTSKT) contributes to the ADP binding site.

It belongs to the pyruvate, phosphate/water dikinase regulatory protein family. PDRP subfamily.

It catalyses the reaction N(tele)-phospho-L-histidyl/L-threonyl-[pyruvate, phosphate dikinase] + ADP = N(tele)-phospho-L-histidyl/O-phospho-L-threonyl-[pyruvate, phosphate dikinase] + AMP + H(+). It carries out the reaction N(tele)-phospho-L-histidyl/O-phospho-L-threonyl-[pyruvate, phosphate dikinase] + phosphate + H(+) = N(tele)-phospho-L-histidyl/L-threonyl-[pyruvate, phosphate dikinase] + diphosphate. Its function is as follows. Bifunctional serine/threonine kinase and phosphorylase involved in the regulation of the pyruvate, phosphate dikinase (PPDK) by catalyzing its phosphorylation/dephosphorylation. The protein is Putative pyruvate, phosphate dikinase regulatory protein of Bacillus mycoides (strain KBAB4) (Bacillus weihenstephanensis).